A 179-amino-acid polypeptide reads, in one-letter code: MSRDRDRARPDTRLSSSDNESDDEDYQLPHSHPEYGSDSSDQDFELNNVGKFCPLPWKPDVARLCADTNKLFRCFIRCRLNSGPFHDALRRALFDIHMIGRMGYRLKQAEWETIMNLTPRQSLHLRRTLRDADSRSAHPISDIYASDSIFHPIAASSGTISSDCDVKGMNDLSVDSKLH.

Basic and acidic residues predominate over residues 1-12 (MSRDRDRARPDT). The segment at 1–40 (MSRDRDRARPDTRLSSSDNESDDEDYQLPHSHPEYGSDSS) is disordered.

Belongs to the herpesviridae ICP22 family.

This Gallid herpesvirus 2 (strain Chicken/Md5/ATCC VR-987) (GaHV-2) protein is Transcriptional regulator ICP22 homolog (MDV088).